The following is an 824-amino-acid chain: 4-methylaminobutanoate oxidase (formaldehyde-forming) (824 aa).

At H67 the chain carries Pros-8alpha-FAD histidine.

It belongs to the GcvT family. It depends on FAD as a cofactor.

It carries out the reaction 4-(methylamino)butanoate + O2 + H2O = 4-aminobutanoate + formaldehyde + H2O2. It participates in alkaloid degradation; nicotine degradation. Its function is as follows. Catalyzes the oxidative demethylation of 4-methylaminobutanoate produced from the pyrrolidine ring of nicotine. To a much lesser extent, can also use sarcosine as substrate, but is not active against dimethylglycine, methylaminopropionitrile, methylaminopropylamine, and alpha-methylaminobutanoate. The protein is 4-methylaminobutanoate oxidase (formaldehyde-forming) (abo) of Paenarthrobacter nicotinovorans (Arthrobacter nicotinovorans).